We begin with the raw amino-acid sequence, 150 residues long: MRRAIFPGTFDPFTIGHYSVVQRTLTFMDEVVIGIGINENKNTYFPIEKRVEMIRKFYKDEPRIKVESYDCLTIDFARQVDAQFIVRGIRTVKDFEYEETIADINRKLAGIETILLFTEPELTCVSSTIVRELLGYNKDISMFIPKGMEM.

Residue Thr-9 participates in substrate binding. ATP contacts are provided by residues 9-10 (TF) and His-17. The substrate site is built by Lys-41, Thr-73, and Arg-87. ATP-binding positions include 88-90 (GIR), Glu-98, and 122-128 (LTCVSST).

This sequence belongs to the bacterial CoaD family. Homohexamer. Mg(2+) serves as cofactor.

The protein resides in the cytoplasm. It carries out the reaction (R)-4'-phosphopantetheine + ATP + H(+) = 3'-dephospho-CoA + diphosphate. Its pathway is cofactor biosynthesis; coenzyme A biosynthesis; CoA from (R)-pantothenate: step 4/5. Its function is as follows. Reversibly transfers an adenylyl group from ATP to 4'-phosphopantetheine, yielding dephospho-CoA (dPCoA) and pyrophosphate. The chain is Phosphopantetheine adenylyltransferase from Bacteroides fragilis (strain ATCC 25285 / DSM 2151 / CCUG 4856 / JCM 11019 / LMG 10263 / NCTC 9343 / Onslow / VPI 2553 / EN-2).